The following is a 100-amino-acid chain: Small ribosomal subunit protein uS14 (100 aa).

Belongs to the universal ribosomal protein uS14 family. As to quaternary structure, part of the 30S ribosomal subunit. Contacts proteins S3 and S10.

In terms of biological role, binds 16S rRNA, required for the assembly of 30S particles and may also be responsible for determining the conformation of the 16S rRNA at the A site. The polypeptide is Small ribosomal subunit protein uS14 (Microcystis aeruginosa (strain NIES-843 / IAM M-2473)).